The primary structure comprises 359 residues: Mitochondrial glutathione transporter SLC25A39 (359 aa).

Topologically, residues 1 to 14 are mitochondrial intermembrane; sequence MDDQDPGGISPLQQ. Solcar repeat units lie at residues 9-151, 159-243, and 253-347; these read ISPL…LKAF, SDLY…VKSQ, and TSVG…GKSF. Residues 15-35 traverse the membrane as a helical segment; it reads MVASGAGAVVTSLFMTPLDVV. At 36-121 the chain is on the mitochondrial matrix side; the sequence is KVRLQSQRPT…VKIVRHEGTR (86 aa). [2Fe-2S] cluster-binding residues include Cys74, Cys78, Cys88, and Cys94. A helical transmembrane segment spans residues 122 to 142; that stretch reads TLWSGLPATLVMTVPATAIYF. The Mitochondrial intermembrane portion of the chain corresponds to 143–164; the sequence is TAYDQLKAFLCGQSLTSDLYAP. Residues 165–185 form a helical membrane-spanning segment; sequence MVAGALARMGTVTVVSPLELV. Topologically, residues 186 to 214 are mitochondrial matrix; sequence RTKLQAQHVSYRELAACVQAAVAQGGWRS. A helical transmembrane segment spans residues 215–235; it reads LWLGWGPTALRDVPFSALYWF. Topologically, residues 236–255 are mitochondrial intermembrane; sequence NYELVKSQLNGPRQKEQTSV. The chain crosses the membrane as a helical span at residues 256 to 276; it reads GISFVAGGISGMVAATLTLPF. Residues 277–317 lie on the Mitochondrial matrix side of the membrane; it reads DVVKTQRQMSLGAVEAMRVKPPRVDSTWLLLRRIQAESGTR. A helical transmembrane segment spans residues 318-338; sequence GLFAGFLPRIIKAAPSCAIMI. Over 339-359 the chain is Mitochondrial intermembrane; the sequence is STYEFGKSFFHRLNQEQPLGH.

Belongs to the mitochondrial carrier (TC 2.A.29) family. In terms of processing, cleaved and degraded by AFG3L2; degradation by AFG3L2 is regulated by the ability of SLC25A39 to bind iron-sulfur. In absence of mitochondrial glutathione, SLC25A39 binds iron-sulfur, preventing cleavage and degradation by AFG3L2. The presence of mitochondrial glutathione prevents iron-sulfur-binding to SLC25A39, promoting cleavage and degradation by AFG3L2.

The protein resides in the mitochondrion inner membrane. The catalysed reaction is glutathione(in) = glutathione(out). The activity of SLC25A39 is regulated by levels of mitochondrial glutathione via its ability to bind [2Fe-2S] iron-sulfur cluster. Upon physiological levels of mitochondrial glutathione, glutathione prevents iron-sulfur-binding to SLC25A39 promoting cleavage and degradation by AFG3L2. Upon depletion of mitochondrial glutathione, SLC25A39 binds iron-sulfur, preventing cleavage and degradation by AFG3L2. Its function is as follows. Mitochondrial transporter required for glutathione import into mitochondria. Glutathione, which plays key roles in oxidative metabolism, is produced exclusively in the cytosol and is imported in many organelles. Mitochondrial glutathione is required for the activity and stability of proteins containing iron-sulfur clusters, as well as erythropoiesis. The sequence is that of Mitochondrial glutathione transporter SLC25A39 (Slc25a39) from Rattus norvegicus (Rat).